The following is a 292-amino-acid chain: uncharacterized protein (292 aa).

A signal peptide spans 1-19 (MFKKYIFILLLLVTSIVKA). The tract at residues 271-292 (KRNNPPLKTNNAKSKNPYDQSK) is disordered.

This is an uncharacterized protein from Rickettsia bellii (strain RML369-C).